We begin with the raw amino-acid sequence, 330 residues long: GDP-mannose transporter (330 aa).

The Cytoplasmic portion of the chain corresponds to 1-13 (MSQLKVDNGPLSH). Residues 14–34 (VANSGPISIGAYCFSSIMMTV) traverse the membrane as a helical segment. The Lumenal portion of the chain corresponds to 35 to 48 (TNKFVVNLKGFNMN). Residues 49–69 (FVMLFVQAAVCVNLLFFLRLL) traverse the membrane as a helical segment. Topologically, residues 70-81 (GYAKFRPLNRTD) are cytoplasmic. Residues 82–98 (AKNWFPITIFLVLMIYT) form a helical membrane-spanning segment. The Lumenal segment spans residues 99–104 (SSKSLQ). Residues 105–124 (YLAVPIYTIFKNLTIILIAY) form a helical membrane-spanning segment. Over 125-138 (GEVLFFGGSVTAME) the chain is Cytoplasmic. A helical membrane pass occupies residues 139 to 155 (LSSFLLMVLSSVVATLG). The Lumenal portion of the chain corresponds to 156–170 (DQQALKKTADAGASL). Residues 171–191 (FNIGYMWMFINCLSSAAFVLV) form a helical membrane-spanning segment. Residues 192 to 203 (MRKRIKLTNFKD) are Cytoplasmic-facing. A helical transmembrane segment spans residues 204–224 (FDTMFYNNILSMPVLLALSFL). The Lumenal segment spans residues 225 to 241 (MEDWSTENLTKNLSRDS). The helical transmembrane segment at 242-262 (VTAMIISGMTAVCISYCSGWC) threads the bilayer. At 263 to 269 (VRVTSST) the chain is on the cytoplasmic side. The chain crosses the membrane as a helical span at residues 270–290 (TYSMVGALNKLPIALSGLIFF). At 291–294 (DAPK) the chain is on the lumenal side. The chain crosses the membrane as a helical span at residues 295–315 (NFLSIFSIFLGFLSGIVYAVA). Residues 316–330 (KQKKQQNPQPSAPIK) lie on the Cytoplasmic side of the membrane.

It belongs to the TPT transporter family. SLC35D subfamily. In terms of assembly, homooligomer.

The protein resides in the golgi apparatus membrane. It localises to the cytoplasmic vesicle membrane. It is found in the endoplasmic reticulum membrane. Involved in the import of GDP-mannose from the cytoplasm into the Golgi lumen. The chain is GDP-mannose transporter (VRG4) from Kluyveromyces lactis (strain ATCC 8585 / CBS 2359 / DSM 70799 / NBRC 1267 / NRRL Y-1140 / WM37) (Yeast).